A 390-amino-acid chain; its full sequence is Protein YghO (390 aa).

This is Protein YghO (yghO) from Escherichia coli (strain K12).